We begin with the raw amino-acid sequence, 403 residues long: 4-hydroxy-3-methylbut-2-enyl diphosphate reductase (403 aa).

Position 66 (Cys66) interacts with [4Fe-4S] cluster. Residue His96 coordinates (2E)-4-hydroxy-3-methylbut-2-enyl diphosphate. Position 96 (His96) interacts with dimethylallyl diphosphate. An isopentenyl diphosphate-binding site is contributed by His96. Position 157 (Cys157) interacts with [4Fe-4S] cluster. A (2E)-4-hydroxy-3-methylbut-2-enyl diphosphate-binding site is contributed by His185. Residue His185 coordinates dimethylallyl diphosphate. Residue His185 coordinates isopentenyl diphosphate. Catalysis depends on Glu187, which acts as the Proton donor. Thr250 contacts (2E)-4-hydroxy-3-methylbut-2-enyl diphosphate. [4Fe-4S] cluster is bound at residue Cys288. (2E)-4-hydroxy-3-methylbut-2-enyl diphosphate-binding residues include Ser317, Ser318, Asn319, and Ser379. Dimethylallyl diphosphate contacts are provided by Ser317, Ser318, Asn319, and Ser379. Isopentenyl diphosphate-binding residues include Ser317, Ser318, Asn319, and Ser379.

This sequence belongs to the IspH family. Requires [4Fe-4S] cluster as cofactor.

It catalyses the reaction isopentenyl diphosphate + 2 oxidized [2Fe-2S]-[ferredoxin] + H2O = (2E)-4-hydroxy-3-methylbut-2-enyl diphosphate + 2 reduced [2Fe-2S]-[ferredoxin] + 2 H(+). It carries out the reaction dimethylallyl diphosphate + 2 oxidized [2Fe-2S]-[ferredoxin] + H2O = (2E)-4-hydroxy-3-methylbut-2-enyl diphosphate + 2 reduced [2Fe-2S]-[ferredoxin] + 2 H(+). It functions in the pathway isoprenoid biosynthesis; dimethylallyl diphosphate biosynthesis; dimethylallyl diphosphate from (2E)-4-hydroxy-3-methylbutenyl diphosphate: step 1/1. The protein operates within isoprenoid biosynthesis; isopentenyl diphosphate biosynthesis via DXP pathway; isopentenyl diphosphate from 1-deoxy-D-xylulose 5-phosphate: step 6/6. Functionally, catalyzes the conversion of 1-hydroxy-2-methyl-2-(E)-butenyl 4-diphosphate (HMBPP) into a mixture of isopentenyl diphosphate (IPP) and dimethylallyl diphosphate (DMAPP). Acts in the terminal step of the DOXP/MEP pathway for isoprenoid precursor biosynthesis. This Picosynechococcus sp. (strain ATCC 27264 / PCC 7002 / PR-6) (Agmenellum quadruplicatum) protein is 4-hydroxy-3-methylbut-2-enyl diphosphate reductase.